A 59-amino-acid chain; its full sequence is Large ribosomal subunit protein bL32 (59 aa).

The tract at residues M1–E59 is disordered. Over residues R49 to E59 the composition is skewed to basic residues.

It belongs to the bacterial ribosomal protein bL32 family.

This is Large ribosomal subunit protein bL32 (rpmF) from Neisseria meningitidis serogroup B (strain ATCC BAA-335 / MC58).